The sequence spans 934 residues: Bifunctional uridylyltransferase/uridylyl-removing enzyme (934 aa).

The tract at residues 1-379 is uridylyltransferase; it reads MSAHDLKLEE…TFSRRKRKLS (379 aa). The tract at residues 380–736 is uridylyl-removing; the sequence is ADGDFVSENH…AKPHTFEAVT (357 aa). The HD domain occupies 496–613; the sequence is VDEHLLRCIA…IDFADTVQTM (118 aa). ACT domains lie at 737 to 819 and 848 to 931; these read EITV…VLAK and VIEV…RSSQ.

The protein belongs to the GlnD family. Mg(2+) is required as a cofactor.

It catalyses the reaction [protein-PII]-L-tyrosine + UTP = [protein-PII]-uridylyl-L-tyrosine + diphosphate. The catalysed reaction is [protein-PII]-uridylyl-L-tyrosine + H2O = [protein-PII]-L-tyrosine + UMP + H(+). Uridylyltransferase (UTase) activity is inhibited by glutamine, while glutamine activates uridylyl-removing (UR) activity. Modifies, by uridylylation and deuridylylation, the PII regulatory proteins (GlnB and homologs), in response to the nitrogen status of the cell that GlnD senses through the glutamine level. Under low glutamine levels, catalyzes the conversion of the PII proteins and UTP to PII-UMP and PPi, while under higher glutamine levels, GlnD hydrolyzes PII-UMP to PII and UMP (deuridylylation). Thus, controls uridylylation state and activity of the PII proteins, and plays an important role in the regulation of nitrogen assimilation and metabolism. The protein is Bifunctional uridylyltransferase/uridylyl-removing enzyme of Brucella anthropi (strain ATCC 49188 / DSM 6882 / CCUG 24695 / JCM 21032 / LMG 3331 / NBRC 15819 / NCTC 12168 / Alc 37) (Ochrobactrum anthropi).